We begin with the raw amino-acid sequence, 318 residues long: 2-keto-3-deoxygluconate permease (318 aa).

A run of 10 helical transmembrane segments spans residues 10–30 (IPGG…TFTP), 42–62 (GLIT…GASI), 76–96 (VLVV…GTFL), 105–125 (MLAG…NGGL), 139–159 (AGAF…VILG), 163–183 (IATF…IGFA), 199–219 (VQTL…LSVI), 224–244 (FAGI…LILA), 263–283 (AGAA…FAPV), and 289–309 (ALVA…TALW).

Belongs to the KdgT transporter family.

Its subcellular location is the cell inner membrane. The catalysed reaction is 2-dehydro-3-deoxy-D-gluconate(in) + H(+)(in) = 2-dehydro-3-deoxy-D-gluconate(out) + H(+)(out). Its function is as follows. Catalyzes the proton-dependent uptake of 2-keto-3-deoxygluconate (KDG) into the cell. The chain is 2-keto-3-deoxygluconate permease from Pectobacterium carotovorum subsp. carotovorum (Erwinia carotovora subsp. carotovora).